Consider the following 427-residue polypeptide: Serine--tRNA ligase (427 aa).

Thr230–Glu232 lines the L-serine pocket. ATP-binding positions include Arg260–Glu262 and Val276. L-serine is bound at residue Glu283. Glu347–Ser350 contributes to the ATP binding site. An L-serine-binding site is contributed by Thr387.

Belongs to the class-II aminoacyl-tRNA synthetase family. Type-1 seryl-tRNA synthetase subfamily. As to quaternary structure, homodimer. The tRNA molecule binds across the dimer.

The protein resides in the cytoplasm. The catalysed reaction is tRNA(Ser) + L-serine + ATP = L-seryl-tRNA(Ser) + AMP + diphosphate + H(+). It catalyses the reaction tRNA(Sec) + L-serine + ATP = L-seryl-tRNA(Sec) + AMP + diphosphate + H(+). The protein operates within aminoacyl-tRNA biosynthesis; selenocysteinyl-tRNA(Sec) biosynthesis; L-seryl-tRNA(Sec) from L-serine and tRNA(Sec): step 1/1. Its function is as follows. Catalyzes the attachment of serine to tRNA(Ser). Is also able to aminoacylate tRNA(Sec) with serine, to form the misacylated tRNA L-seryl-tRNA(Sec), which will be further converted into selenocysteinyl-tRNA(Sec). The polypeptide is Serine--tRNA ligase (Micrococcus luteus (strain ATCC 4698 / DSM 20030 / JCM 1464 / CCM 169 / CCUG 5858 / IAM 1056 / NBRC 3333 / NCIMB 9278 / NCTC 2665 / VKM Ac-2230) (Micrococcus lysodeikticus)).